We begin with the raw amino-acid sequence, 183 residues long: ATP synthase subunit b, chloroplastic (183 aa).

The helical transmembrane segment at 25–45 (DILATNLINLTVVVGVLIFFG) threads the bilayer.

Belongs to the ATPase B chain family. As to quaternary structure, F-type ATPases have 2 components, F(1) - the catalytic core - and F(0) - the membrane proton channel. F(1) has five subunits: alpha(3), beta(3), gamma(1), delta(1), epsilon(1). F(0) has four main subunits: a(1), b(1), b'(1) and c(10-14). The alpha and beta chains form an alternating ring which encloses part of the gamma chain. F(1) is attached to F(0) by a central stalk formed by the gamma and epsilon chains, while a peripheral stalk is formed by the delta, b and b' chains.

The protein resides in the plastid. It localises to the chloroplast thylakoid membrane. Its function is as follows. F(1)F(0) ATP synthase produces ATP from ADP in the presence of a proton or sodium gradient. F-type ATPases consist of two structural domains, F(1) containing the extramembraneous catalytic core and F(0) containing the membrane proton channel, linked together by a central stalk and a peripheral stalk. During catalysis, ATP synthesis in the catalytic domain of F(1) is coupled via a rotary mechanism of the central stalk subunits to proton translocation. Component of the F(0) channel, it forms part of the peripheral stalk, linking F(1) to F(0). The chain is ATP synthase subunit b, chloroplastic from Zea mays (Maize).